Consider the following 577-residue polypeptide: Cytochrome P450 714D1 (577 aa).

Topologically, residues 1–3 (MES) are lumenal. A helical; Signal-anchor for type III membrane protein transmembrane segment spans residues 4–24 (FFVFFTAAALPVVVAAAVIAG). Topologically, residues 25-577 (LCITAAWLAR…STAPVHSSHN (553 aa)) are cytoplasmic. The disordered stretch occupies residues 315–343 (REHGGKAAPPSPPERDFLGSIIENSGGQP). Residue Cys-504 participates in heme binding.

It belongs to the cytochrome P450 family. Requires heme as cofactor. In terms of tissue distribution, expressed in rapidly elongating or dividing tissues, including the shoot apical meristem, the intercalary meristem and elongating zones of internodes, and panicle but not in young seedlings, roots and leaves. During the heading stage, the highest expression is detected in the flowering spikelets, anthers, the divisional zone and the node of the uppermost internode.

It is found in the endoplasmic reticulum membrane. Catalyzes the 16alpha,17-epoxidation on non-13-hydroxylated gibberellins (GAs), including GA4, GA9, and GA12. No activity with GA1, GA20, GA53 or ent-kaurenoic acid. Reduces the biological activity of GAs. In Oryza sativa subsp. japonica (Rice), this protein is Cytochrome P450 714D1 (CYP714D1).